Consider the following 669-residue polypeptide: DNA ligase (669 aa).

Residues 32 to 36 (DAEYD), 81 to 82 (SL), and Glu-113 each bind NAD(+). Residue Lys-115 is the N6-AMP-lysine intermediate of the active site. Arg-136, Glu-173, Lys-290, and Lys-314 together coordinate NAD(+). The Zn(2+) site is built by Cys-408, Cys-411, Cys-426, and Cys-432. The BRCT domain maps to 592-669 (AVDSALAGKI…DEQALIEFLK (78 aa)).

It belongs to the NAD-dependent DNA ligase family. LigA subfamily. It depends on Mg(2+) as a cofactor. Mn(2+) serves as cofactor.

The catalysed reaction is NAD(+) + (deoxyribonucleotide)n-3'-hydroxyl + 5'-phospho-(deoxyribonucleotide)m = (deoxyribonucleotide)n+m + AMP + beta-nicotinamide D-nucleotide.. Its function is as follows. DNA ligase that catalyzes the formation of phosphodiester linkages between 5'-phosphoryl and 3'-hydroxyl groups in double-stranded DNA using NAD as a coenzyme and as the energy source for the reaction. It is essential for DNA replication and repair of damaged DNA. The protein is DNA ligase of Vibrio cholerae serotype O1 (strain ATCC 39541 / Classical Ogawa 395 / O395).